Consider the following 114-residue polypeptide: DNA-directed RNA polymerases II, IV and V subunit 9B (114 aa).

Residues C7, C10, C29, C32, C76, C79, C103, and C108 each contribute to the Zn(2+) site. The segment at 72–113 adopts a TFIIS-type zinc-finger fold; it reads KAVRCAKCQHGEAVFFQATARGEEGMTLFFVCCNPNCSHRWR.

The protein belongs to the archaeal RpoM/eukaryotic RPA12/RPB9/RPC11 RNA polymerase family. In terms of assembly, component of the RNA polymerase II, IV and V complexes. Interacts with NRPD1.

The protein resides in the nucleus. The protein localises to the nucleolus. Its function is as follows. DNA-dependent RNA polymerase catalyzes the transcription of DNA into RNA using the four ribonucleoside triphosphates as substrates. Component of RNA polymerase II which synthesizes mRNA precursors and many functional non-coding RNAs. Pol II is the central component of the basal RNA polymerase II transcription machinery. It is composed of mobile elements that move relative to each other. Component of RNA polymerases IV and V which mediate short-interfering RNAs (siRNA) accumulation and subsequent RNA-directed DNA methylation-dependent (RdDM) transcriptional gene silencing (TGS) of endogenous repeated sequences, including transposable elements. Required for RNA silencing. This chain is DNA-directed RNA polymerases II, IV and V subunit 9B (NRPB9B), found in Arabidopsis thaliana (Mouse-ear cress).